Here is a 141-residue protein sequence, read N- to C-terminus: Hydroperoxide reductase (141 aa).

This sequence belongs to the OsmC/Ohr family. In terms of assembly, homodimer.

The protein resides in the cytoplasm. Reduces organic and inorganic peroxide substrates. Protects the cell against oxidative stress. The protein is Hydroperoxide reductase of Mycoplasma pneumoniae (strain ATCC 29342 / M129 / Subtype 1) (Mycoplasmoides pneumoniae).